The chain runs to 366 residues: Uroporphyrinogen decarboxylase (366 aa).

Residues 28–32 (RQAGR), D78, Y160, T215, and H333 contribute to the substrate site.

The protein belongs to the uroporphyrinogen decarboxylase family. As to quaternary structure, homodimer.

The protein resides in the cytoplasm. The catalysed reaction is uroporphyrinogen III + 4 H(+) = coproporphyrinogen III + 4 CO2. Its pathway is porphyrin-containing compound metabolism; protoporphyrin-IX biosynthesis; coproporphyrinogen-III from 5-aminolevulinate: step 4/4. Catalyzes the decarboxylation of four acetate groups of uroporphyrinogen-III to yield coproporphyrinogen-III. This is Uroporphyrinogen decarboxylase from Paraburkholderia xenovorans (strain LB400).